The chain runs to 455 residues: MYNCAILLAAGEGKRMKSATPKVLHKVCGKEMVNHVIDALREANIEDVNVIVGKKAKEVQLKTESRSVSFSFQEQQLGTGHAVKCAKEFLLGKEGNVAIFTGDAPLITSKTIKTLMEYHETNGFHGTILTSIIDNPSGYGRVLRENNGEVDKIIEHKDCLKEELKIKEINAGMYCFNIQALLEALDKLDNNNAQGEYYLTDVIEILKKDGKKVGALAVNFEETMGVNSRLQLAEVEAIMRKRINAMHLENGVTIIDPNNTYIDCNVVIHNDSIIYPGNILQGKTVIKENCVLYPNSRIVDSIIEKSVVIQNSVILQSNIGENTTVGPFAYIRPDSNIGSAVRIGDFVEIKKSTIGNNTKVSHLTYIGDAEVGERCNFGCGTVVVNYDGKEKHKTIVGDDVFIGCNANLVSPVEVKDNSYIAAGSTITDEVPRGALAIARSKQINKEDWVKKKDEK.

The tract at residues 1–229 (MYNCAILLAA…FEETMGVNSR (229 aa)) is pyrophosphorylase. UDP-N-acetyl-alpha-D-glucosamine contacts are provided by residues 8–11 (LAAG), K22, Q73, and 78–79 (GT). Residue D103 participates in Mg(2+) binding. Residues G140, E155, N170, and N227 each coordinate UDP-N-acetyl-alpha-D-glucosamine. Residue N227 coordinates Mg(2+). Residues 230 to 250 (LQLAEVEAIMRKRINAMHLEN) form a linker region. Residues 251 to 455 (GVTIIDPNNT…EDWVKKKDEK (205 aa)) are N-acetyltransferase. Residues R332 and K350 each contribute to the UDP-N-acetyl-alpha-D-glucosamine site. Catalysis depends on H362, which acts as the Proton acceptor. Positions 365 and 376 each coordinate UDP-N-acetyl-alpha-D-glucosamine. Acetyl-CoA is bound by residues 385-386 (NY), A422, and R439.

This sequence in the N-terminal section; belongs to the N-acetylglucosamine-1-phosphate uridyltransferase family. In the C-terminal section; belongs to the transferase hexapeptide repeat family. In terms of assembly, homotrimer. The cofactor is Mg(2+).

The protein resides in the cytoplasm. The catalysed reaction is alpha-D-glucosamine 1-phosphate + acetyl-CoA = N-acetyl-alpha-D-glucosamine 1-phosphate + CoA + H(+). The enzyme catalyses N-acetyl-alpha-D-glucosamine 1-phosphate + UTP + H(+) = UDP-N-acetyl-alpha-D-glucosamine + diphosphate. It participates in nucleotide-sugar biosynthesis; UDP-N-acetyl-alpha-D-glucosamine biosynthesis; N-acetyl-alpha-D-glucosamine 1-phosphate from alpha-D-glucosamine 6-phosphate (route II): step 2/2. The protein operates within nucleotide-sugar biosynthesis; UDP-N-acetyl-alpha-D-glucosamine biosynthesis; UDP-N-acetyl-alpha-D-glucosamine from N-acetyl-alpha-D-glucosamine 1-phosphate: step 1/1. It functions in the pathway bacterial outer membrane biogenesis; LPS lipid A biosynthesis. In terms of biological role, catalyzes the last two sequential reactions in the de novo biosynthetic pathway for UDP-N-acetylglucosamine (UDP-GlcNAc). The C-terminal domain catalyzes the transfer of acetyl group from acetyl coenzyme A to glucosamine-1-phosphate (GlcN-1-P) to produce N-acetylglucosamine-1-phosphate (GlcNAc-1-P), which is converted into UDP-GlcNAc by the transfer of uridine 5-monophosphate (from uridine 5-triphosphate), a reaction catalyzed by the N-terminal domain. This Clostridium tetani (strain Massachusetts / E88) protein is Bifunctional protein GlmU.